A 216-amino-acid chain; its full sequence is Redox-sensing transcriptional repressor Rex (216 aa).

Residues lysine 15 to isoleucine 54 constitute a DNA-binding region (H-T-H motif). NAD(+) is bound at residue glycine 89–glycine 94.

Belongs to the transcriptional regulatory Rex family. As to quaternary structure, homodimer.

Its subcellular location is the cytoplasm. Functionally, modulates transcription in response to changes in cellular NADH/NAD(+) redox state. In Rubrobacter xylanophilus (strain DSM 9941 / JCM 11954 / NBRC 16129 / PRD-1), this protein is Redox-sensing transcriptional repressor Rex.